Consider the following 42-residue polypeptide: Photosystem I reaction center subunit IX (42 aa).

A helical transmembrane segment spans residues 7 to 27 (YLSAAPVLSTLWLGALAGLLI).

Belongs to the PsaJ family.

Its subcellular location is the plastid membrane. May help in the organization of the PsaE and PsaF subunits. This chain is Photosystem I reaction center subunit IX, found in Cuscuta exaltata (Tall dodder).